The primary structure comprises 201 residues: 3-isopropylmalate dehydratase small subunit (201 aa).

This sequence belongs to the LeuD family. LeuD type 1 subfamily. As to quaternary structure, heterodimer of LeuC and LeuD.

It catalyses the reaction (2R,3S)-3-isopropylmalate = (2S)-2-isopropylmalate. It participates in amino-acid biosynthesis; L-leucine biosynthesis; L-leucine from 3-methyl-2-oxobutanoate: step 2/4. Catalyzes the isomerization between 2-isopropylmalate and 3-isopropylmalate, via the formation of 2-isopropylmaleate. This chain is 3-isopropylmalate dehydratase small subunit, found in Shewanella baltica (strain OS155 / ATCC BAA-1091).